The sequence spans 293 residues: MTNSKNRFGNKFIGAHVSAAGGVDNAPLRAREIGANAFALFTKNQRQWVAKPLEEKTISAFKANCALLGFSPQQILPHDSYLINLGAPEAEKLEKSRLAFIDEMERCQLLGLNLLNFHPGSHLEKISEKACLYLIAESINLAHQAVPDVVAVIENTAGQGSNLGWRFEHLAEIIEQVEDKSRVGVCLDTCHTFAAGYDLRTPEACEATFAEFERVVGMHYLRAMHINDSKVKLASKVDRHHALGKGEIGWDCFEYIAKDSRFDSIPLILETIEPELWPQEIEQLRKYHLSSIA.

Positions 78, 118, 154, 188, 191, 225, 238, 240, and 270 each coordinate Zn(2+).

This sequence belongs to the AP endonuclease 2 family. The cofactor is Zn(2+).

It catalyses the reaction Endonucleolytic cleavage to 5'-phosphooligonucleotide end-products.. Functionally, endonuclease IV plays a role in DNA repair. It cleaves phosphodiester bonds at apurinic or apyrimidinic (AP) sites, generating a 3'-hydroxyl group and a 5'-terminal sugar phosphate. In Vibrio vulnificus (strain YJ016), this protein is Probable endonuclease 4.